A 487-amino-acid polypeptide reads, in one-letter code: Inosine-5'-monophosphate dehydrogenase (487 aa).

CBS domains follow at residues 93–149 (IVSD…NKTV) and 153–214 (MTPK…CKDE). Residues Asp248, 248-250 (DSS), and 298-300 (GIG) contribute to the NAD(+) site. Residues Gly300 and Gly302 each contribute to the K(+) site. Ser303 contacts IMP. Position 305 (Cys305) interacts with K(+). The active-site Thioimidate intermediate is Cys305. Residues 338–340 (DGG), 361–362 (GS), and 385–389 (YRGMG) contribute to the IMP site. The active-site Proton acceptor is the Arg401. Glu415 lines the IMP pocket. Residues Glu469, Ser470, and His471 each coordinate K(+).

Belongs to the IMPDH/GMPR family. As to quaternary structure, homotetramer. K(+) is required as a cofactor.

The enzyme catalyses IMP + NAD(+) + H2O = XMP + NADH + H(+). It participates in purine metabolism; XMP biosynthesis via de novo pathway; XMP from IMP: step 1/1. Its activity is regulated as follows. Mycophenolic acid (MPA) is a non-competitive inhibitor that prevents formation of the closed enzyme conformation by binding to the same site as the amobile flap. In contrast, mizoribine monophosphate (MZP) is a competitive inhibitor that induces the closed conformation. MPA is a potent inhibitor of mammalian IMPDHs but a poor inhibitor of the bacterial enzymes. MZP is a more potent inhibitor of bacterial IMPDH. Catalyzes the conversion of inosine 5'-phosphate (IMP) to xanthosine 5'-phosphate (XMP), the first committed and rate-limiting step in the de novo synthesis of guanine nucleotides, and therefore plays an important role in the regulation of cell growth. In Pasteurella multocida (strain Pm70), this protein is Inosine-5'-monophosphate dehydrogenase.